A 166-amino-acid polypeptide reads, in one-letter code: Crossover junction endodeoxyribonuclease RuvC (166 aa).

Catalysis depends on residues D7, E67, and D140. Mg(2+) is bound by residues D7, E67, and D140.

It belongs to the RuvC family. As to quaternary structure, homodimer which binds Holliday junction (HJ) DNA. The HJ becomes 2-fold symmetrical on binding to RuvC with unstacked arms; it has a different conformation from HJ DNA in complex with RuvA. In the full resolvosome a probable DNA-RuvA(4)-RuvB(12)-RuvC(2) complex forms which resolves the HJ. Mg(2+) serves as cofactor.

It localises to the cytoplasm. It carries out the reaction Endonucleolytic cleavage at a junction such as a reciprocal single-stranded crossover between two homologous DNA duplexes (Holliday junction).. Functionally, the RuvA-RuvB-RuvC complex processes Holliday junction (HJ) DNA during genetic recombination and DNA repair. Endonuclease that resolves HJ intermediates. Cleaves cruciform DNA by making single-stranded nicks across the HJ at symmetrical positions within the homologous arms, yielding a 5'-phosphate and a 3'-hydroxyl group; requires a central core of homology in the junction. The consensus cleavage sequence is 5'-(A/T)TT(C/G)-3'. Cleavage occurs on the 3'-side of the TT dinucleotide at the point of strand exchange. HJ branch migration catalyzed by RuvA-RuvB allows RuvC to scan DNA until it finds its consensus sequence, where it cleaves and resolves the cruciform DNA. The protein is Crossover junction endodeoxyribonuclease RuvC of Brevibacillus brevis (strain 47 / JCM 6285 / NBRC 100599).